A 417-amino-acid chain; its full sequence is Serine hydroxymethyltransferase (417 aa).

(6S)-5,6,7,8-tetrahydrofolate contacts are provided by residues Leu120 and Gly124 to Leu126. An N6-(pyridoxal phosphate)lysine modification is found at Lys229.

Belongs to the SHMT family. Homodimer. Pyridoxal 5'-phosphate serves as cofactor.

Its subcellular location is the cytoplasm. The catalysed reaction is (6R)-5,10-methylene-5,6,7,8-tetrahydrofolate + glycine + H2O = (6S)-5,6,7,8-tetrahydrofolate + L-serine. Its pathway is one-carbon metabolism; tetrahydrofolate interconversion. The protein operates within amino-acid biosynthesis; glycine biosynthesis; glycine from L-serine: step 1/1. Its function is as follows. Catalyzes the reversible interconversion of serine and glycine with tetrahydrofolate (THF) serving as the one-carbon carrier. This reaction serves as the major source of one-carbon groups required for the biosynthesis of purines, thymidylate, methionine, and other important biomolecules. Also exhibits THF-independent aldolase activity toward beta-hydroxyamino acids, producing glycine and aldehydes, via a retro-aldol mechanism. The sequence is that of Serine hydroxymethyltransferase from Anaeromyxobacter dehalogenans (strain 2CP-1 / ATCC BAA-258).